The primary structure comprises 2110 residues: Tenascin (2110 aa).

The first 22 residues, 1–22 (MGAVTWLLPGIFLALFALTPEG), serve as a signal peptide directing secretion. N38 is a glycosylation site (N-linked (GlcNAc...) asparagine). Phosphoserine occurs at positions 65, 70, and 72. The tract at residues 69-91 (ESASGEKDLTPTPESSGSFQEHT) is disordered. O-linked (Xyl...) (chondroitin sulfate) serine glycosylation is present at S72. Over residues 80–89 (TPESSGSFQE) the composition is skewed to polar residues. Residues 118 to 142 (DVKELLSRLEELELLVSSLREQCTM) adopt a coiled-coil conformation. Residues N166 and N184 are each glycosylated (N-linked (GlcNAc...) asparagine). The EGF-like 1; incomplete domain occupies 174–185 (CVCEPGWKGPNC). 14 EGF-like domains span residues 186–216 (SEPD…GEDC), 217–247 (SQLA…GPDC), 248–279 (GLEV…GEDC), 280–310 (NEPL…GEDC), 311–341 (SELI…GEDC), 342–372 (GELT…GADC), 373–403 (SEKR…GADC), 404–434 (GDLQ…GEDC), 435–465 (SQRR…GFDC), 466–496 (SEMS…GEDC), 497–527 (RDRR…GPDC), 528–558 (AELS…GKDC), 559–589 (KEQR…GLDC), and 590–621 (GQRS…IDCS). 42 disulfides stabilise this stretch: C190/C200, C194/C205, C207/C216, C221/C231, C225/C236, C238/C247, C252/C263, C256/C268, C270/C279, C284/C294, C288/C299, C301/C310, C315/C325, C319/C330, C332/C341, C346/C356, C350/C361, C363/C372, C377/C387, C381/C392, C394/C403, C408/C418, C412/C423, C425/C434, C439/C449, C443/C454, C456/C465, C470/C480, C474/C485, C487/C496, C501/C511, C505/C516, C518/C527, C532/C542, C536/C547, C549/C558, C563/C573, C567/C578, C580/C589, C594/C604, C598/C609, and C611/C620. N-linked (GlcNAc...) asparagine glycosylation is present at N327. 14 consecutive Fibronectin type-III domains span residues 625-715 (PPKD…LPAP), 716-804 (EGLK…TRLD), 805-894 (APSH…TGLD), 895-988 (APRN…IDAP), 989-1077 (KDLR…VPSL), 1078-1165 (ENLT…TGTT), 1167-1259 (NLGE…LPQL), 1260-1348 (GGLS…AREP), 1349-1440 (EIGN…ALPL), 1442-1530 (ENLT…EAEP), 1531-1620 (EVDN…TAMG), 1621-1710 (SPKE…ALDG), 1711-1797 (PSGL…TDLD), and 1798-1886 (SPRE…IGLL). Residue N788 is glycosylated (N-linked (GlcNAc...) asparagine). Residue T905 is modified to Phosphothreonine. N1018, N1079, N1093, N1119, N1184, N1210, N1275, N1301, N1354, N1364, N1394, and N1443 each carry an N-linked (GlcNAc...) asparagine glycan. N1718 carries N-linked (GlcNAc...) asparagine glycosylation. Residues 1884–2099 (GLLYPFPRDC…FAEMKLRPSN (216 aa)) enclose the Fibrinogen C-terminal domain. N1969 and N2071 each carry an N-linked (GlcNAc...) asparagine glycan.

Belongs to the tenascin family. Homohexamer; disulfide-linked. A homotrimer may be formed in the triple coiled-coil region and may be stabilized by disulfide rings at both ends. Two of such half-hexabrachions may be disulfide linked within the central globule. Interacts with CSPG4. Interacts (via the 3rd fibronectin type-III domain) with integrin ITGA9:ITGB1. N-glycosylated. In terms of tissue distribution, expressed in the corneal limbus, the periosteum and the rib molecular layer of the cerebellum, the matrix of kidney tubules, blood vessels, stomach and intestine (at protein level). As to expression, weakly expressed in the brain. Highly expressed in the thymus and moderately expressed in the brain.

The protein resides in the secreted. It localises to the extracellular space. It is found in the extracellular matrix. In terms of biological role, extracellular matrix protein implicated in guidance of migrating neurons as well as axons during development, synaptic plasticity as well as neuronal regeneration. Promotes neurite outgrowth when provided to neurons in culture. May play a role in supporting the growth of epithelial tumors. Ligand for integrins ITGA8:ITGB1, ITGA9:ITGB1, ITGAV:ITGB3 and ITGAV:ITGB6. In tumors, stimulates angiogenesis by elongation, migration and sprouting of endothelial cells. The sequence is that of Tenascin from Mus musculus (Mouse).